We begin with the raw amino-acid sequence, 200 residues long: Ras-related protein RHN1 (200 aa).

GTP contacts are provided by residues 17–25 (GDMGAGKSS), 36–42 (LEFQEST), 65–69 (DTAGQ), 123–126 (NKAD), and 153–155 (SAK). An Effector region motif is present at residues 39–47 (QESTIGAAF). 2 S-geranylgeranyl cysteine lipidation sites follow: C198 and C199.

The protein belongs to the small GTPase superfamily. Rab family. High in stem, root, and inflorescence.

It is found in the cell membrane. Functionally, protein transport. Probably involved in vesicular traffic. This Nicotiana plumbaginifolia (Leadwort-leaved tobacco) protein is Ras-related protein RHN1 (RHN1).